Consider the following 415-residue polypeptide: MKRSTLLSLDAFAKTEEDVRVRTRAGGLITLSCILTTLFLLVNEWGQFNSVVTRPQLVVDRDRHAKLELNMDVTFPSMPCDLVNLDIMDDSGEMQLDILDAGFTMSRLNSEGRPVGDATELHVGGNGDGTAPVNNDPNYCGPCYGAKDQSQNENLAQEEKVCCQDCDAVRSAYLEAGWAFFDGKNIEQCEREGYVSKINEHLNEGCRIKGSAQINRIQGNLHFAPGKPYQNAYGHFHDTSLYDKTSNLNFNHIINHLSFGKPIQSHSKLLGNDKRHGGAVVATSPLDGRQVFPDRNTHFHQFSYFAKIVPTRYEYLDNVVIETAQFSATFHSRPLAGGRDKDHPNTLHVRGGIPGMFVFFEMSPLKVINKEQHGQTWSGFILNCITSIGGVLAVGTVMDKLFYKAQRSIWGKKSQ.

Residues methionine 1–arginine 24 lie on the Cytoplasmic side of the membrane. Residues alanine 25–tryptophan 45 traverse the membrane as a helical segment. Residues glycine 46–threonine 376 lie on the Lumenal side of the membrane. The chain crosses the membrane as a helical span at residues tryptophan 377–valine 397. Residues methionine 398–glutamine 415 are Cytoplasmic-facing. Positions phenylalanine 402–tyrosine 403 match the Phenylalanine-tyrosine motif motif.

The protein belongs to the ERGIC family. As to quaternary structure, interacts with ERV41.

It localises to the endoplasmic reticulum membrane. Its subcellular location is the golgi apparatus membrane. Constituent of COPII-coated endoplasmic reticulum-derived transport vesicles. Required for efficient transport of a subset of secretory proteins to the Golgi. The C-terminal Phe-Tyr motif is required for exit from the endoplasmic reticulum. Facilitates retrograde transport from the Golgi to the endoplasmic reticulum. The protein is ER-derived vesicles protein ERV46 (ERV46) of Saccharomyces cerevisiae (strain ATCC 204508 / S288c) (Baker's yeast).